A 417-amino-acid chain; its full sequence is Carboxypeptidase B (417 aa).

The signal sequence occupies residues 1 to 16 (MLAFLILVTVTLASAH). Residues 17–110 (HSGEHFEGDK…LEAQFDSRVR (94 aa)) constitute a propeptide, activation peptide. The 295-residue stretch at 118 to 412 (KYNNWETIEA…LAIKYVTSYV (295 aa)) folds into the Peptidase M14 domain. A disulfide bridge connects residues Cys-173 and Cys-186. The Zn(2+) site is built by His-176 and Glu-179. Residues 176-179 (HARE), Arg-234, and 251-252 (NR) contribute to the substrate site. Disulfide bonds link Cys-245/Cys-268 and Cys-259/Cys-273. His-304 provides a ligand contact to Zn(2+). Substrate contacts are provided by residues 305-306 (SY) and Tyr-356. The active-site Proton donor/acceptor is the Glu-378.

Belongs to the peptidase M14 family. Zn(2+) is required as a cofactor.

The protein resides in the secreted. It localises to the zymogen granule lumen. It catalyses the reaction Preferential release of a C-terminal lysine or arginine amino acid.. The polypeptide is Carboxypeptidase B (CPB1) (Bos taurus (Bovine)).